The chain runs to 130 residues: Small ribosomal subunit protein uS11c (130 aa).

This sequence belongs to the universal ribosomal protein uS11 family. In terms of assembly, part of the 30S ribosomal subunit.

It localises to the plastid. The protein localises to the chloroplast. The sequence is that of Small ribosomal subunit protein uS11c from Tupiella akineta (Green alga).